A 254-amino-acid polypeptide reads, in one-letter code: Major prion protein (254 aa).

The N-terminal stretch at 1 to 22 is a signal peptide; that stretch reads MANLGYWLLALFVTMWTDVGLC. The segment at 23–38 is interaction with ADGRG6; the sequence is KKRPKPGGWNTGGSRY. Residues 23–231 form an interaction with GRB2, ERI3 and SYN1 region; that stretch reads KKRPKPGGWN…QAYYDGRRSS (209 aa). The interval 25 to 104 is disordered; it reads RPKPGGWNTG…HNQWNKPSKP (80 aa). Residue Pro-44 is modified to Hydroxyproline. Tandem repeats lie at residues 51–58, 59–66, 67–74, 75–82, and 83–90. A 5 X 8 AA tandem repeats of P-H-G-G-G-W-G-Q region spans residues 51–90; that stretch reads PQGGTWGQPHGGGWGQPHGGSWGQPHGGSWGQPHGGGWGQ. The segment covering 54–94 has biased composition (gly residues); the sequence is GTWGQPHGGGWGQPHGGSWGQPHGGSWGQPHGGGWGQGGGT. Positions 60, 61, 62, 68, 69, 70, 76, 77, 78, 84, 85, and 86 each coordinate Cu(2+). A disulfide bond links Cys-178 and Cys-213. N-linked (GlcNAc...) asparagine glycosylation is found at Asn-180 and Asn-196. A lipid anchor (GPI-anchor amidated serine) is attached at Ser-230. Residues 231–254 constitute a propeptide, removed in mature form; the sequence is SSTVLFSSPPVILLISFLIFLIVG.

Belongs to the prion family. Monomer and homodimer. Has a tendency to aggregate into amyloid fibrils containing a cross-beta spine, formed by a steric zipper of superposed beta-strands. Soluble oligomers may represent an intermediate stage on the path to fibril formation. Copper binding may promote oligomerization. Interacts with GRB2, APP, ERI3/PRNPIP and SYN1. Mislocalized cytosolically exposed PrP interacts with MGRN1; this interaction alters MGRN1 subcellular location and causes lysosomal enlargement. Interacts with APP. Interacts with KIAA1191. Interacts with ADGRG6. In terms of processing, N-glycosylated. Highly expressed in the brain, lung, kidney and heart. Expressed at low levels in the liver and spleen.

The protein resides in the cell membrane. Its subcellular location is the golgi apparatus. Its function is as follows. Its primary physiological function is unclear. May play a role in neuronal development and synaptic plasticity. May be required for neuronal myelin sheath maintenance. May promote myelin homeostasis through acting as an agonist for ADGRG6 receptor. May play a role in iron uptake and iron homeostasis. Soluble oligomers are toxic to cultured neuroblastoma cells and induce apoptosis (in vitro). Association with GPC1 (via its heparan sulfate chains) targets PRNP to lipid rafts. Also provides Cu(2+) or Zn(2+) for the ascorbate-mediated GPC1 deaminase degradation of its heparan sulfate side chains. The protein is Major prion protein (Prnp) of Mus musculus (Mouse).